The following is an 843-amino-acid chain: Beta-mannosidase B (843 aa).

Glu432 serves as the catalytic Proton donor.

It belongs to the glycosyl hydrolase 2 family. Beta-mannosidase B subfamily.

The catalysed reaction is Hydrolysis of terminal, non-reducing beta-D-mannose residues in beta-D-mannosides.. Its pathway is glycan metabolism; N-glycan degradation. Exoglycosidase that cleaves the single beta-linked mannose residue from the non-reducing end of beta-mannosidic oligosaccharides of various complexity and length. Prefers mannobiose over mannotriose and has no activity against polymeric mannan. Is also severely restricted by galactosyl substitutions at the +1 subsite. Releases the terminal mannose residue from mannobiose, mannotriose and galactosyl-mannotriose (GM3), but not from galactosyl-mannobiose (GM2) or di-galactosyl-mannopentaose (G2M5). The sequence is that of Beta-mannosidase B (mndB) from Emericella nidulans (strain FGSC A4 / ATCC 38163 / CBS 112.46 / NRRL 194 / M139) (Aspergillus nidulans).